Here is a 456-residue protein sequence, read N- to C-terminus: Smoothelin-like protein 2 (456 aa).

A coiled-coil region spans residues 24–88; sequence LEGAVRALHE…RQVEALGLAT (65 aa). Thr96 bears the Phosphothreonine mark. 3 positions are modified to phosphoserine: Ser98, Ser126, and Ser131. Positions 120-129 are enriched in polar residues; that stretch reads HATFSLSGRS. Disordered stretches follow at residues 120–140, 154–190, and 220–310; these read HATFSLSGRSPSVEHDEASDL, GHQLDAGPANGSSEVQTSSAQEPPRPRPVSLSLRMPH, and VGGF…GAQA. The segment covering 131–140 has biased composition (basic and acidic residues); the sequence is SVEHDEASDL. Residues 163–174 are compositionally biased toward polar residues; sequence NGSSEVQTSSAQ. Low complexity predominate over residues 242–251; sequence SSSFTRSLSG. Residues Ser250, Ser252, and Ser265 each carry the phosphoserine modification. Over residues 268-279 the composition is skewed to pro residues; that stretch reads LVTPPQSPPSSQ. Thr270 is subject to Phosphothreonine. Ser274 is modified (phosphoserine). Positions 298–308 are enriched in polar residues; the sequence is RSQTLPRTSGA. Ser339 carries the post-translational modification Phosphoserine. One can recognise a Calponin-homology (CH) domain in the interval 346–453; sequence SSIKQILLEW…YVQSLYNHLR (108 aa).

This sequence belongs to the smoothelin family.

The chain is Smoothelin-like protein 2 (Smtnl2) from Mus musculus (Mouse).